The primary structure comprises 191 residues: NAD(P)H-quinone oxidoreductase subunit L, chloroplastic (191 aa).

Residues 1-46 (MSRCGSLGLYAPNALPSLSLKPRSVKSPFCITSHTKPNDTLLHNVN) constitute a chloroplast transit peptide. The next 3 membrane-spanning stretches (helical) occupy residues 61-81 (TILAAQLGAVLATIDHPALAI), 93-113 (VVLDIGIISVWYFLVMPPIIM), and 129-149 (YLQFMFVFMFFPGLLLWAPFL).

Belongs to the NDH complex subunit L family. Part of the chloroplast NDH complex, composed of a mixture of chloroplast and nucleus encoded subunits. Component of the NDH subcomplex A, at least composed of ndhH, ndhI, ndhJ, ndhK, ndhL, ndhM, ndhN and ndhO.

The protein localises to the plastid. The protein resides in the chloroplast thylakoid membrane. The enzyme catalyses a plastoquinone + NADH + (n+1) H(+)(in) = a plastoquinol + NAD(+) + n H(+)(out). It carries out the reaction a plastoquinone + NADPH + (n+1) H(+)(in) = a plastoquinol + NADP(+) + n H(+)(out). In terms of biological role, NDH shuttles electrons from NAD(P)H:plastoquinone, via FMN and iron-sulfur (Fe-S) centers, to quinones in the photosynthetic chain and possibly in a chloroplast respiratory chain. The immediate electron acceptor for the enzyme in this species is believed to be plastoquinone. Couples the redox reaction to proton translocation, and thus conserves the redox energy in a proton gradient. The polypeptide is NAD(P)H-quinone oxidoreductase subunit L, chloroplastic (Arabidopsis thaliana (Mouse-ear cress)).